The chain runs to 151 residues: UPF0178 protein ESA_02916 (151 aa).

This sequence belongs to the UPF0178 family.

The chain is UPF0178 protein ESA_02916 from Cronobacter sakazakii (strain ATCC BAA-894) (Enterobacter sakazakii).